Here is a 112-residue protein sequence, read N- to C-terminus: Protein FAM32A (112 aa).

A disordered region spans residues 23–58 (TKRKKKKKDKDKAKLLEAMGTSKKNEEEKRRGLDKR). The span at 45 to 58 (KKNEEEKRRGLDKR) shows a compositional bias: basic and acidic residues.

This sequence belongs to the FAM32 family.

The protein localises to the nucleus. Functionally, may induce G2 arrest and apoptosis. May also increase cell sensitivity to apoptotic stimuli. This chain is Protein FAM32A (FAM32A), found in Bos taurus (Bovine).